Reading from the N-terminus, the 1284-residue chain is Peroxisomal ATPase PEX1 (1284 aa).

The segment at 339–373 (SPKQQQDKSKQGVLLPDKEKQLSKSPDHKQISSNR) is disordered. The span at 343-373 (QQDKSKQGVLLPDKEKQLSKSPDHKQISSNR) shows a compositional bias: basic and acidic residues. Residues 600–607 (GGKGSGKS) and 882–889 (GPPGTGKT) each bind ATP. Phosphoserine is present on residues Ser-1182, Ser-1210, and Ser-1212. The segment at 1261 to 1284 (FQNPKKRKNQSGTVFRTGQKVTLA) is disordered. Residues 1270-1284 (QSGTVFRTGQKVTLA) are compositionally biased toward polar residues.

Belongs to the AAA ATPase family. As to quaternary structure, homooligomer; homooligomerizes in the cytosol, interaction with PEX6 promotes dissociation of the homooligomer. Interacts with PEX6; forming the PEX1-PEX6 AAA ATPase complex, which is composed of a heterohexamer formed by a trimer of PEX1-PEX6 dimers. Interacts indirectly with PEX26, via its interaction with PEX6.

The protein localises to the cytoplasm. The protein resides in the cytosol. It is found in the peroxisome membrane. The catalysed reaction is ATP + H2O = ADP + phosphate + H(+). Component of the PEX1-PEX6 AAA ATPase complex, a protein dislocase complex that mediates the ATP-dependent extraction of the PEX5 receptor from peroxisomal membranes, an essential step for PEX5 recycling. Specifically recognizes PEX5 monoubiquitinated at 'Cys-11', and pulls it out of the peroxisome lumen through the PEX2-PEX10-PEX12 retrotranslocation channel. Extraction by the PEX1-PEX6 AAA ATPase complex is accompanied by unfolding of the TPR repeats and release of bound cargo from PEX5. The sequence is that of Peroxisomal ATPase PEX1 from Mus musculus (Mouse).